A 518-amino-acid polypeptide reads, in one-letter code: MVGAKAGPSPGTSLGLAQQHSGGSSVLVKSPFCQVCCCGPAPCASCCHSRWPSLTASTCSRLFYILLHVGASAICCLLLSRTVVERVWGKTHRIQMPSGLCAHLFGLSDCPVLSGSGAVYRVCAGTATFHLLQAVLLVHLHSPTSPRAQLHNSFWLLKLLFLLGLCAIAFCIPDEHLFPAWHYIGICGGFAFILLQLVLITAFAHSWNKNWQTGAAQDCSWFLAVLLATLGFYSMAGVGAVLLFHYYTHPAGCLLNKMLLSLHLCFCGLISFLSIAPCIRLKQPRSGLLQASVISCYIMYLTFSALSSRPPERVILQGQNHTLCLPGLSKMEPQTPDISLAMLSASIMYACVLFACNEASYLAEVFGPLWIVKVYSYEFQKPSLCFCCPETVEADKGQRGGAARPADQETPPAPPVQVQHLSYNYSAFHFVFFLASLYVMVTLTNWFSYEGAELEKTFIKGSWATFWVKVASCWACVLLYLGLLLAPLCWPPTQKPQPLILRRRRHRIISPDNKYPPV.

Helical transmembrane passes span 59–79, 122–142, 153–173, 184–204, 222–242, 259–279, 286–306, 338–357, 427–447, and 470–490; these read CSRL…CLLL, VCAG…HLHS, SFWL…FCIP, IGIC…TAFA, FLAV…GAVL, LLSL…APCI, SGLL…FSAL, ISLA…FACN, AFHF…TNWF, and VASC…PLCW.

This sequence belongs to the TDE1 family.

It localises to the membrane. Incorporates a polar amino acid serine into membranes and facilitates the synthesis of two serine-derived lipids, phosphatidylserine and sphingolipids. This is Serine incorporator 4 (SERINC4) from Homo sapiens (Human).